The following is a 591-amino-acid chain: Aspartate--tRNA ligase (591 aa).

Glutamate 176 is an L-aspartate binding site. The segment at 200–203 (QILK) is aspartate. Arginine 222 serves as a coordination point for L-aspartate. ATP is bound by residues 222–224 (RDE) and glutamine 231. Residue histidine 450 coordinates L-aspartate. Glutamate 484 provides a ligand contact to ATP. Arginine 491 lines the L-aspartate pocket. ATP is bound at residue 536 to 539 (GLDR).

It belongs to the class-II aminoacyl-tRNA synthetase family. Type 1 subfamily. As to quaternary structure, homodimer.

The protein localises to the cytoplasm. It carries out the reaction tRNA(Asp) + L-aspartate + ATP = L-aspartyl-tRNA(Asp) + AMP + diphosphate. Functionally, catalyzes the attachment of L-aspartate to tRNA(Asp) in a two-step reaction: L-aspartate is first activated by ATP to form Asp-AMP and then transferred to the acceptor end of tRNA(Asp). The protein is Aspartate--tRNA ligase of Listeria welshimeri serovar 6b (strain ATCC 35897 / DSM 20650 / CCUG 15529 / CIP 8149 / NCTC 11857 / SLCC 5334 / V8).